Here is a 214-residue protein sequence, read N- to C-terminus: tRNA (guanine-N(7)-)-methyltransferase (214 aa).

S-adenosyl-L-methionine-binding residues include glutamate 45, aspartate 70, asparagine 97, and asparagine 119. Lysine 123 contributes to the substrate binding site. Residues 125–130 (RHNKRR) are interaction with RNA. Residues aspartate 155 and 193–196 (TEYE) contribute to the substrate site.

Belongs to the class I-like SAM-binding methyltransferase superfamily. TrmB family.

The enzyme catalyses guanosine(46) in tRNA + S-adenosyl-L-methionine = N(7)-methylguanosine(46) in tRNA + S-adenosyl-L-homocysteine. It functions in the pathway tRNA modification; N(7)-methylguanine-tRNA biosynthesis. Functionally, catalyzes the formation of N(7)-methylguanine at position 46 (m7G46) in tRNA. The protein is tRNA (guanine-N(7)-)-methyltransferase of Clostridium novyi (strain NT).